The primary structure comprises 323 residues: tRNA (guanine(9)-N1)-methyltransferase (323 aa).

Residues Met-1 to Ala-16 are compositionally biased toward polar residues. 2 disordered regions span residues Met-1–Glu-34 and Thr-192–Asp-215. Residues Glu-25–Glu-34 are compositionally biased toward basic and acidic residues. One can recognise an SAM-dependent MTase TRM10-type domain in the interval Lys-99–Ser-319. Low complexity predominate over residues Gly-204–Asp-215. Residues Leu-225–Thr-226, Gly-245, Asp-249–His-253, Cys-257, Leu-271, and His-283–Leu-285 contribute to the S-adenosyl-L-methionine site. Asp-249 functions as the Proton acceptor in the catalytic mechanism.

This sequence belongs to the class IV-like SAM-binding methyltransferase superfamily. TRM10 family. Monomer.

The protein localises to the cytoplasm. It localises to the nucleus. It carries out the reaction guanosine(9) in tRNA + S-adenosyl-L-methionine = N(1)-methylguanosine(9) in tRNA + S-adenosyl-L-homocysteine + H(+). Functionally, S-adenosyl-L-methionine-dependent guanine N(1)-methyltransferase that catalyzes the formation of N(1)-methylguanine at position 9 (m1G9) in cytoplasmic tRNA. This is tRNA (guanine(9)-N1)-methyltransferase from Candida albicans (strain SC5314 / ATCC MYA-2876) (Yeast).